A 950-amino-acid chain; its full sequence is Leucine--tRNA ligase (950 aa).

Positions 66 to 77 (PYPSGAGLHVGH) match the 'HIGH' region motif. The short motif at 721–725 (KIGKS) is the 'KMSKS' region element. Lysine 724 serves as a coordination point for ATP.

Belongs to the class-I aminoacyl-tRNA synthetase family.

It localises to the cytoplasm. It catalyses the reaction tRNA(Leu) + L-leucine + ATP = L-leucyl-tRNA(Leu) + AMP + diphosphate. This is Leucine--tRNA ligase from Nocardia farcinica (strain IFM 10152).